We begin with the raw amino-acid sequence, 367 residues long: Flagellar P-ring protein (367 aa).

The first 22 residues, 1–22 (MRRMLVIRWILAIHLIATQVFA), serve as a signal peptide directing secretion.

It belongs to the FlgI family. In terms of assembly, the basal body constitutes a major portion of the flagellar organelle and consists of four rings (L,P,S, and M) mounted on a central rod.

It localises to the periplasm. Its subcellular location is the bacterial flagellum basal body. Functionally, assembles around the rod to form the L-ring and probably protects the motor/basal body from shearing forces during rotation. The protein is Flagellar P-ring protein of Legionella pneumophila (strain Corby).